Reading from the N-terminus, the 317-residue chain is Olfactory receptor 2G2 (317 aa).

The Extracellular portion of the chain corresponds to 1–28 (MGMVRHTNESNLAGFILLGFSDYPQLQK). N8 carries an N-linked (GlcNAc...) asparagine glycan. A helical membrane pass occupies residues 29 to 52 (VLFVLILILYLLTILGNTTIILVS). Residues 53–60 (RLEPKLHM) are Cytoplasmic-facing. A helical transmembrane segment spans residues 61–82 (PMYFFLSHLSFLYRCFTSSVIP). Residues 83-103 (QLLVNLWEPMKTIAYGGCLVH) are Extracellular-facing. C100 and C192 form a disulfide bridge. A helical transmembrane segment spans residues 104-123 (LYNSHALGSTECVLPAVMSC). The Cytoplasmic portion of the chain corresponds to 124–142 (DRYVAVCRPLHYTVLMHIH). Residues 143 to 161 (LCMALASMAWLSGIATTLV) traverse the membrane as a helical segment. The Extracellular portion of the chain corresponds to 162–198 (QSTLTLQLPFCGHRQVDHFICEVPVLIKLACVGTTFN). A helical membrane pass occupies residues 199–222 (EAELFVASILFLIVPVSFILVSSG). Residues 223–239 (YIAHAVLRIKSATRRQK) lie on the Cytoplasmic side of the membrane. Residues 240 to 262 (AFGTCFSHLTVVTIFYGTIIFMY) traverse the membrane as a helical segment. Over 263 to 275 (LQPAKSRSRDQGK) the chain is Extracellular. The helical transmembrane segment at 276 to 295 (FVSLFYTVVTRMLNPLIYTL) threads the bilayer. The Cytoplasmic portion of the chain corresponds to 296 to 317 (RIKEVKGALKKVLAKALGVNIL).

Belongs to the G-protein coupled receptor 1 family.

The protein resides in the cell membrane. In terms of biological role, odorant receptor. In Homo sapiens (Human), this protein is Olfactory receptor 2G2 (OR2G2).